Reading from the N-terminus, the 86-residue chain is Cell division topological specificity factor (86 aa).

This sequence belongs to the MinE family.

Its function is as follows. Prevents the cell division inhibition by proteins MinC and MinD at internal division sites while permitting inhibition at polar sites. This ensures cell division at the proper site by restricting the formation of a division septum at the midpoint of the long axis of the cell. In Shewanella piezotolerans (strain WP3 / JCM 13877), this protein is Cell division topological specificity factor.